The primary structure comprises 125 residues: MYSDPYFAKPAPKSTGREYFNAGWLDKQLNKIPGIKPEDVQATLAELTALSVAEQVQLAGGCERLLVCGGGARNPLVMSRMSTLLPGTEVCVTDDFGVSGDDMEALHSPGWLFEPCPVNRVIYPQ.

Belongs to the anhydro-N-acetylmuramic acid kinase family.

This is an uncharacterized protein from Yersinia enterocolitica.